A 551-amino-acid polypeptide reads, in one-letter code: Glucan 1,4-alpha-maltotetraohydrolase (551 aa).

Residues M1–A21 form the signal peptide. Ca(2+) is bound by residues D22, Q23, H34, D37, and E38. Residue Y99 to F100 participates in substrate binding. N137 lines the Ca(2+) pocket. H138 serves as a coordination point for substrate. C161 and C171 are disulfide-bonded. Ca(2+) contacts are provided by D172 and D175. F177 to E181 contacts substrate. Residue D183 coordinates Ca(2+). A substrate-binding site is contributed by R212. D214 serves as the catalytic Nucleophile. Position 218 (G218) interacts with Ca(2+). C237 and C272 are oxidised to a cystine. Catalysis depends on E240, which acts as the Proton donor. Substrate contacts are provided by H314 and Q326. The region spanning G449–F551 is the CBM20 domain.

It belongs to the glycosyl hydrolase 13 family. In terms of assembly, monomer. Ca(2+) is required as a cofactor.

The protein resides in the secreted. The catalysed reaction is Hydrolysis of (1-&gt;4)-alpha-D-glucosidic linkages in amylaceous polysaccharides, to remove successive maltotetraose residues from the non-reducing chain ends.. Its pathway is glycan degradation; starch degradation. The sequence is that of Glucan 1,4-alpha-maltotetraohydrolase (mta) from Roseateles saccharophilus (Pseudomonas saccharophila).